The chain runs to 468 residues: Sorting and assembly machinery component 50 homolog B (468 aa).

The interval 1-25 (MGTVHARSLDPLPMNGPDFGSPDDA) is disordered. Residues 44–124 (VVVQRVHFEG…LDVTFEVTEL (81 aa)) form the POTRA domain.

The protein belongs to the SAM50/omp85 family. As to quaternary structure, associates with the mitochondrial contact site and cristae organizing system (MICOS) complex (also known as MINOS or MitOS complex).

Its subcellular location is the mitochondrion outer membrane. May play a role in the maintenance of the structure of mitochondrial cristae. This is Sorting and assembly machinery component 50 homolog B (samm50-b) from Xenopus laevis (African clawed frog).